Consider the following 359-residue polypeptide: Membrane-bound lytic murein transglycosylase C (359 aa).

The first 16 residues, 1-16 (MKKYLALALIAPLLIS), serve as a signal peptide directing secretion. Cys17 carries N-palmitoyl cysteine lipidation. Residue Cys17 is the site of S-diacylglycerol cysteine attachment.

It belongs to the transglycosylase Slt family.

It is found in the cell outer membrane. It carries out the reaction Exolytic cleavage of the (1-&gt;4)-beta-glycosidic linkage between N-acetylmuramic acid (MurNAc) and N-acetylglucosamine (GlcNAc) residues in peptidoglycan, from either the reducing or the non-reducing ends of the peptidoglycan chains, with concomitant formation of a 1,6-anhydrobond in the MurNAc residue.. Murein-degrading enzyme. May play a role in recycling of muropeptides during cell elongation and/or cell division. The polypeptide is Membrane-bound lytic murein transglycosylase C (Escherichia coli O139:H28 (strain E24377A / ETEC)).